A 300-amino-acid chain; its full sequence is tRNA pseudouridine synthase B (300 aa).

Catalysis depends on aspartate 41, which acts as the Nucleophile.

The protein belongs to the pseudouridine synthase TruB family. Type 1 subfamily.

It carries out the reaction uridine(55) in tRNA = pseudouridine(55) in tRNA. Responsible for synthesis of pseudouridine from uracil-55 in the psi GC loop of transfer RNAs. The polypeptide is tRNA pseudouridine synthase B (Synechococcus sp. (strain WH7803)).